We begin with the raw amino-acid sequence, 65 residues long: Large ribosomal subunit protein uL29 (65 aa).

The protein belongs to the universal ribosomal protein uL29 family.

The polypeptide is Large ribosomal subunit protein uL29 (rpmC) (Buchnera aphidicola subsp. Acyrthosiphon pisum (strain APS) (Acyrthosiphon pisum symbiotic bacterium)).